We begin with the raw amino-acid sequence, 409 residues long: POU domain, class 4, transcription factor 2 (409 aa).

Residues 26 to 93 (YSALHSTSPG…SEAMRRACLP (68 aa)) are disordered. Low complexity predominate over residues 31-52 (STSPGSSAPIAPSASSPSSSSN). Gly residues predominate over residues 53-69 (AGGGGGGGGGGGGGGGR). The interval 91 to 237 (CLPTPPSNIF…MHQAALSMAH (147 aa)) is required for transcriptional activation. Positions 110 to 119 (RAEALAAVDI) match the POU-IV box motif. Residues 153 to 166 (AASSSSVPISHPSA) show a composition bias toward low complexity. The disordered stretch occupies residues 153–188 (AASSSSVPISHPSALAGTHHHHHHHHHHHHQPHQAL). A compositionally biased stretch (basic residues) spans 170 to 184 (THHHHHHHHHHHHQP). Positions 171–185 (HHHHHHHHHHHHQPH) match the Nuclear speckle targeting signal motif. The tract at residues 238–409 (AHGLPSHMGC…QKRMKYSAGI (172 aa)) is required for DNA-binding and transcriptional repression. The 78-residue stretch at 250 to 327 (DVDADPRDLE…ILQAWLEEAE (78 aa)) folds into the POU-specific domain. The segment at residues 345-404 (KKRKRTSIAAPEKRSLEAYFAIQPRPSSEKIAAIAEKLDLKKNVVRVWFCNQRQKQKRMK) is a DNA-binding region (homeobox).

Belongs to the POU transcription factor family. Class-4 subfamily. In terms of assembly, interacts with POU4F1; this interaction inhibits both POU4F1 DNA-binding and transcriptional activities. Interacts (C-terminus) with ESR1 (via DNA-binding domain); this interaction increases the estrogen receptor ESR1 transcriptional activity in a DNA- and ligand 17-beta-estradiol-independent manner. Interacts (via C-terminus) with TP53 (via N-terminus). Interacts with DLX1 (via homeobox DNA-binding domain); this interaction suppresses DLX1-mediated transcriptional activity in postnatal retina enhancing retinal ganglion cell (RGC) differentiation. Interacts with DLX2 (via homeobox DNA-binding domain); this interaction enhances RGC differentiation. Interacts (via C-terminus) with ISL1 (via C-terminus). Interacts with ISL2. Interacts with LHX2. Expressed in the brain. Expressed in the ganglion cell layer of the retina.

It localises to the nucleus. Its subcellular location is the nucleus speckle. The protein resides in the cytoplasm. Its function is as follows. Tissue-specific DNA-binding transcription factor involved in the development and differentiation of target cells. Functions either as activator or repressor modulating the rate of target gene transcription through RNA polymerase II enzyme in a promoter-dependent manner. Binds to the consensus octamer motif 5'-AT[A/T]A[T/A]T[A/T]A-3' of promoter of target genes. Plays a fundamental role in the gene regulatory network essential for retinal ganglion cell (RGC) differentiation. Binds to an octamer site to form a ternary complex with ISL1; cooperates positively with ISL1 and ISL2 to potentiate transcriptional activation of RGC target genes being involved in RGC fate commitment in the developing retina and RGC axon formation and pathfinding. Inhibits DLX1 and DLX2 transcriptional activities preventing DLX1- and DLX2-mediated ability to promote amacrine cell fate specification. In cooperation with TP53 potentiates transcriptional activation of BAX promoter activity increasing neuronal cell apoptosis. Negatively regulates BAX promoter activity in the absence of TP53. Acts as a transcriptional coactivator via its interaction with the transcription factor ESR1 by enhancing its effect on estrogen response element (ERE)-containing promoter. Antagonizes the transcriptional stimulatory activity of POU4F1 by preventing its binding to an octamer motif. Involved in TNFSF11-mediated terminal osteoclast differentiation. The protein is POU domain, class 4, transcription factor 2 of Homo sapiens (Human).